Reading from the N-terminus, the 432-residue chain is Luc7-like protein 3 (432 aa).

N-acetylmethionine is present on M1. A phosphoserine mark is found at S3, S110, and S115. Residues 124–181 adopt a coiled-coil conformation; it reads KNEEKIQVLTDKIDVLLQQIEELGSEGKVEEAQGMMKLVEQLKEERELLRSTTSTIES. Position 231 is an N6-acetyllysine (K231). Over residues 234–287 the composition is skewed to basic and acidic residues; it reads LRKRTEEPDRDERLKKEKQEREEREKEREREREERERKRRREEEEREKERARDR. The tract at residues 234–432 is disordered; sequence LRKRTEEPDR…IKSEGDTQSN (199 aa). The span at 288-301 shows a compositional bias: basic residues; the sequence is ERRKRSRSRSRHSS. Residues 302–311 show a composition bias toward basic and acidic residues; sequence RTSDRRCSRS. Residues 312–367 show a composition bias toward basic residues; the sequence is RDHKRSRSRERRRSRSRDRRRSRSHDRSERKHRSRSRDRRRSKSRDRKSYKHRSKS. Positions 368–414 are enriched in basic and acidic residues; that stretch reads RDREQDRKSKEKEKRGSDDKKSSVKSSSREKQSEDTNTESKESDTKN. The residue at position 420 (S420) is a Phosphoserine. Residues 421-432 show a composition bias toward basic and acidic residues; the sequence is EDIKSEGDTQSN. Residue K424 forms a Glycyl lysine isopeptide (Lys-Gly) (interchain with G-Cter in SUMO1); alternate linkage. A Glycyl lysine isopeptide (Lys-Gly) (interchain with G-Cter in SUMO2); alternate cross-link involves residue K424. S425 and S431 each carry phosphoserine.

Belongs to the Luc7 family. As to quaternary structure, may interact with SFRS1 and form homodimers. Interacts with JMJD6. Interacts with RBM25. Interacts with RSRC1 (via Arg/Ser-rich domain). Interacts with RRP1B.

It localises to the nucleus speckle. Functionally, binds cAMP regulatory element DNA sequence. May play a role in RNA splicing. The sequence is that of Luc7-like protein 3 (LUC7L3) from Bos taurus (Bovine).